A 157-amino-acid polypeptide reads, in one-letter code: Mediator of RNA polymerase II transcription subunit 22 (157 aa).

This sequence belongs to the Mediator complex subunit 22 family. As to quaternary structure, component of the Mediator complex.

It localises to the nucleus. In terms of biological role, component of the Mediator complex, a coactivator involved in the regulated transcription of nearly all RNA polymerase II-dependent genes. Mediator functions as a bridge to convey information from gene-specific regulatory proteins to the basal RNA polymerase II transcription machinery. Mediator is recruited to promoters by direct interactions with regulatory proteins and serves as a scaffold for the assembly of a functional preinitiation complex with RNA polymerase II and the general transcription factors. The protein is Mediator of RNA polymerase II transcription subunit 22 (mdt-22) of Caenorhabditis elegans.